The primary structure comprises 106 residues: Valine dehydrogenase (106 aa).

The active site involves K91.

The protein belongs to the Glu/Leu/Phe/Val dehydrogenases family. In terms of assembly, homodimer.

The protein localises to the cytoplasm. The catalysed reaction is L-valine + NAD(+) + H2O = 3-methyl-2-oxobutanoate + NH4(+) + NADH + H(+). It participates in amino-acid degradation; L-valine degradation. Oxidative deamination of branched-chain amino acids. The catabolism of valine is the major source of fatty acid precursors for macrolide biosynthesis and a vital source of antibiotic precursors. This is Valine dehydrogenase (vdh) from Streptomyces ambofaciens.